A 70-amino-acid chain; its full sequence is DNA-directed RNA polymerase subunit epsilon (70 aa).

It belongs to the RNA polymerase subunit epsilon family. RNAP is composed of a core of 2 alpha, a beta and a beta' subunit. The core is associated with a delta subunit, and at least one of epsilon or omega. When a sigma factor is associated with the core the holoenzyme is formed, which can initiate transcription.

The enzyme catalyses RNA(n) + a ribonucleoside 5'-triphosphate = RNA(n+1) + diphosphate. A non-essential component of RNA polymerase (RNAP). The chain is DNA-directed RNA polymerase subunit epsilon from Bacillus cytotoxicus (strain DSM 22905 / CIP 110041 / 391-98 / NVH 391-98).